A 171-amino-acid polypeptide reads, in one-letter code: S-ribosylhomocysteine lyase (171 aa).

Fe cation-binding residues include His-54, His-58, and Cys-128.

Belongs to the LuxS family. In terms of assembly, homodimer. The cofactor is Fe cation.

The enzyme catalyses S-(5-deoxy-D-ribos-5-yl)-L-homocysteine = (S)-4,5-dihydroxypentane-2,3-dione + L-homocysteine. Functionally, involved in the synthesis of autoinducer 2 (AI-2) which is secreted by bacteria and is used to communicate both the cell density and the metabolic potential of the environment. The regulation of gene expression in response to changes in cell density is called quorum sensing. Catalyzes the transformation of S-ribosylhomocysteine (RHC) to homocysteine (HC) and 4,5-dihydroxy-2,3-pentadione (DPD). In Escherichia coli O81 (strain ED1a), this protein is S-ribosylhomocysteine lyase.